The sequence spans 214 residues: Outer-membrane lipoprotein carrier protein (214 aa).

The first 24 residues, 1 to 24 (MKIKLAFAVLLALCLSLSVMPVLA), serve as a signal peptide directing secretion.

This sequence belongs to the LolA family. Monomer.

Its subcellular location is the periplasm. In terms of biological role, participates in the translocation of lipoproteins from the inner membrane to the outer membrane. Only forms a complex with a lipoprotein if the residue after the N-terminal Cys is not an aspartate (The Asp acts as a targeting signal to indicate that the lipoprotein should stay in the inner membrane). This chain is Outer-membrane lipoprotein carrier protein, found in Alkalilimnicola ehrlichii (strain ATCC BAA-1101 / DSM 17681 / MLHE-1).